Reading from the N-terminus, the 35-residue chain is uncharacterized protein (35 aa).

The N-terminal stretch at 1–18 is a signal peptide; that stretch reads MRSLVFVQLSLLSWEIFC.

This is an uncharacterized protein from Saccharomyces cerevisiae (strain ATCC 204508 / S288c) (Baker's yeast).